Here is a 1342-residue protein sequence, read N- to C-terminus: DNA-directed RNA polymerase subunit beta (1342 aa).

2 positions are modified to N6-acetyllysine: lysine 1022 and lysine 1200.

This sequence belongs to the RNA polymerase beta chain family. In terms of assembly, the RNAP catalytic core consists of 2 alpha, 1 beta, 1 beta' and 1 omega subunit. When a sigma factor is associated with the core the holoenzyme is formed, which can initiate transcription.

The catalysed reaction is RNA(n) + a ribonucleoside 5'-triphosphate = RNA(n+1) + diphosphate. In terms of biological role, DNA-dependent RNA polymerase catalyzes the transcription of DNA into RNA using the four ribonucleoside triphosphates as substrates. In Shigella flexneri serotype 5b (strain 8401), this protein is DNA-directed RNA polymerase subunit beta.